A 1548-amino-acid chain; its full sequence is Lysine-specific demethylase 5D (1548 aa).

The JmjN domain occupies 14 to 55; that stretch reads CPVFEPSWAEFRDPLGYIAKIRPIAEKSGICKIRPPADWQPP. Residues 79 to 169 form the ARID domain; that stretch reads TRVKLNYLDQ…IIYPYEIFQS (91 aa). Glycyl lysine isopeptide (Lys-Gly) (interchain with G-Cter in SUMO2) cross-links involve residues lysine 205, lysine 229, lysine 244, and lysine 279. The tract at residues 208–229 is disordered; the sequence is CYSRRGKRLQPEPEPTEEDIEK. 2 positions are modified to phosphoserine: serine 300 and serine 316. The segment at 325–371 adopts a PHD-type 1 zinc-finger fold; it reads VCRICSRGDEVDKFLLCDGCSDNYHIFCLLPPLSEVPKGVWRCPKCI. Tyrosine 439 contacts 2-oxoglutarate. Positions 467–633 constitute a JmjC domain; sequence EYAACGWNLN…VGRQCIEHYR (167 aa). Fe cation contacts are provided by histidine 513 and glutamate 515. Positions 521, 523, and 531 each coordinate 2-oxoglutarate. Histidine 601 contributes to the Fe cation binding site. Residues 706–758 form a C5HC2 zinc finger; that stretch reads CIKCKTTCFLSALACYDCPDSLVCLSHINDLCKCSRNRQYLRYRYTLDELPAM. Phosphoserine is present on residues serine 889 and serine 893. A Glycyl lysine isopeptide (Lys-Gly) (interchain with G-Cter in SUMO2) cross-link involves residue lysine 1123. Residues 1182–1243 form a PHD-type 2 zinc finger; the sequence is ICICGQVCAG…DTKFLCPLCM (62 aa). The residue at position 1355 (serine 1355) is a Phosphoserine. Residues 1438 to 1468 are disordered; the sequence is KPENPGNWSEEQTPERRRQRRQKVVLSRKGE.

Belongs to the JARID1 histone demethylase family. Interacts withPCGF6, MSH5, ZMYND8, AR. L-ascorbate serves as cofactor. The cofactor is Fe(2+).

It is found in the nucleus. It carries out the reaction N(6),N(6),N(6)-trimethyl-L-lysyl(4)-[histone H3] + 3 2-oxoglutarate + 3 O2 = L-lysyl(4)-[histone H3] + 3 formaldehyde + 3 succinate + 3 CO2. Histone demethylase that specifically demethylates 'Lys-4' of histone H3, thereby playing a central role in histone code. Does not demethylate histone H3 'Lys-9', H3 'Lys-27', H3 'Lys-36', H3 'Lys-79' or H4 'Lys-20'. Demethylates trimethylated and dimethylated but not monomethylated H3 'Lys-4'. May play a role in spermatogenesis. Involved in transcriptional repression of diverse metastasis-associated genes; in this function seems to cooperate with ZMYND8. Suppresses prostate cancer cell invasion. Regulates androgen receptor (AR) transcriptional activity by demethylating H3K4me3 active transcription marks. The chain is Lysine-specific demethylase 5D (Kdm5d) from Mus musculus (Mouse).